The primary structure comprises 275 residues: Fructose-2,6-bisphosphatase TIGAR (275 aa).

Catalysis depends on His11, which acts as the Tele-phosphohistidine intermediate. The active-site Proton donor/acceptor is Glu89.

It belongs to the phosphoglycerate mutase family.

It localises to the cytoplasm. It is found in the nucleus. The protein resides in the mitochondrion. The enzyme catalyses beta-D-fructose 2,6-bisphosphate + H2O = beta-D-fructose 6-phosphate + phosphate. In terms of biological role, fructose-bisphosphatase hydrolyzing fructose-2,6-bisphosphate as well as fructose-1,6-bisphosphate. Acts as a negative regulator of glycolysis by lowering intracellular levels of fructose-2,6-bisphosphate in a p53/TP53-dependent manner, resulting in the pentose phosphate pathway (PPP) activation and NADPH production. Contributes to the generation of reduced glutathione to cause a decrease in intracellular reactive oxygen species (ROS) content, correlating with its ability to protect cells from oxidative or metabolic stress-induced cell death. May play a role in mitophagy inhibition. The sequence is that of Fructose-2,6-bisphosphatase TIGAR from Xenopus tropicalis (Western clawed frog).